A 278-amino-acid chain; its full sequence is Potassium/proton antiporter CemA (278 aa).

The next 4 helical transmembrane spans lie at 60–80, 155–175, 201–221, and 239–259; these read YLLL…SFVF, AMKN…LIVT, FLII…GWEV, and IFLF…YWIF.

Belongs to the CemA family.

The protein resides in the plastid. It is found in the chloroplast inner membrane. The catalysed reaction is K(+)(in) + H(+)(out) = K(+)(out) + H(+)(in). Functionally, contributes to K(+)/H(+) antiport activity by supporting proton efflux to control proton extrusion and homeostasis in chloroplasts in a light-dependent manner to modulate photosynthesis. Prevents excessive induction of non-photochemical quenching (NPQ) under continuous-light conditions. Indirectly promotes efficient inorganic carbon uptake into chloroplasts. The sequence is that of Potassium/proton antiporter CemA from Rhodomonas salina (Cryptomonas salina).